Here is a 117-residue protein sequence, read N- to C-terminus: Small ribosomal subunit protein bS6 (117 aa).

The disordered stretch occupies residues 97 to 117; the sequence is TEEPSAILTKKDDRRGRRERN.

It belongs to the bacterial ribosomal protein bS6 family.

In terms of biological role, binds together with bS18 to 16S ribosomal RNA. This is Small ribosomal subunit protein bS6 from Maricaulis maris (strain MCS10) (Caulobacter maris).